We begin with the raw amino-acid sequence, 316 residues long: MTKEFHHVTVLLHETIDMLDVKPDGIYVDATLGGAGHSEYLLSKLSEKGHLYAFDQDQNAIDNAQKRLAPYIEKGMVTFIKDNFRHLQARLRETGVQEIDGICYDLGVSSPQLDQRERGFSYKKDAPLDMRMNQDASLTAYEVVNNYDYHDLVRIFFKYGEDKFSKQIARKIEQAREVKPIETTTELAEIIKLVKPAKELKKKGHPAKQIFQAIRIEVNDELGAADESIQQAMDMLALDGRISVITFHSLEDRLTKQLFKEASTVEVPKGLPFIPDDLKPKMELVSRKPILPSAEELEANNRSHSAKLRVVRKIHK.

S-adenosyl-L-methionine-binding positions include A35–H37, D55, F84, D105, and Q112.

It belongs to the methyltransferase superfamily. RsmH family.

The protein resides in the cytoplasm. It carries out the reaction cytidine(1402) in 16S rRNA + S-adenosyl-L-methionine = N(4)-methylcytidine(1402) in 16S rRNA + S-adenosyl-L-homocysteine + H(+). In terms of biological role, specifically methylates the N4 position of cytidine in position 1402 (C1402) of 16S rRNA. The sequence is that of Ribosomal RNA small subunit methyltransferase H from Streptococcus pneumoniae (strain ATCC 700669 / Spain 23F-1).